Consider the following 454-residue polypeptide: Probable multidrug resistance protein NorM (454 aa).

A run of 12 helical transmembrane segments spans residues 13–32 (QFVLLFFPIFITQMSLFAMS), 47–69 (LAGVAIGTSIWIPVSTGLTGILM), 90–112 (VVIQAVYLAICASFVVMLIGFFA), 132–154 (QFLSIIAIGIIPLFTYTVLRGFI), 166–188 (ITLLSLPINVILNYVLIFGHFGF), 193–215 (GVGAAIASTATYWCILIITVMII), 244–266 (LGVPIGFAIFFETSIFAAVTLMM), 286–308 (LLYMTPLSLAMAMTIAVGFEVGA), 317–339 (YGFIGIGLALAFALLYSILLYFF), 359–381 (EFLIFAILFQISDAIATPVQGAL), 388–410 (NVSLIMTLIAYWVIGLPLGYILA), and 420–442 (YWIGLIIGLAFGATFLLIRLFQV).

The protein belongs to the multi antimicrobial extrusion (MATE) (TC 2.A.66.1) family.

It localises to the cell membrane. Its function is as follows. Multidrug efflux pump. The chain is Probable multidrug resistance protein NorM (norM) from Bacillus cereus (strain ATCC 10987 / NRS 248).